A 300-amino-acid polypeptide reads, in one-letter code: Zinc finger CCCH domain-containing protein 14 (300 aa).

Residues 1 to 38 (MEVGGRKRGKPDGANGAGGKRARESESFQTGVGSKSKP) form a disordered region. 2 C3H1-type zinc fingers span residues 33-61 (GSKS…HHFP) and 99-127 (TVKT…HGER). One can recognise a KH domain in the interval 170–234 (SATAKISVDA…DQIKNASAMV (65 aa)). Positions 243–262 (GGAPPQGKKPVGGSHRGGGP) are disordered. The C3H1-type 3 zinc-finger motif lies at 265–292 (NFKTKLCENFTKGSCTFGDRCHFAHGEN).

The sequence is that of Zinc finger CCCH domain-containing protein 14 from Oryza sativa subsp. japonica (Rice).